Here is a 264-residue protein sequence, read N- to C-terminus: Triosephosphate isomerase (264 aa).

13–15 (NWK) contributes to the substrate binding site. His106 functions as the Electrophile in the catalytic mechanism. Glu179 acts as the Proton acceptor in catalysis. Substrate contacts are provided by residues Gly185, Ser223, and 244 to 245 (GG).

This sequence belongs to the triosephosphate isomerase family. Homodimer.

Its subcellular location is the cytoplasm. The catalysed reaction is D-glyceraldehyde 3-phosphate = dihydroxyacetone phosphate. The protein operates within carbohydrate biosynthesis; gluconeogenesis. Its pathway is carbohydrate degradation; glycolysis; D-glyceraldehyde 3-phosphate from glycerone phosphate: step 1/1. Its function is as follows. Involved in the gluconeogenesis. Catalyzes stereospecifically the conversion of dihydroxyacetone phosphate (DHAP) to D-glyceraldehyde-3-phosphate (G3P). In Acinetobacter baumannii (strain AB0057), this protein is Triosephosphate isomerase.